The primary structure comprises 668 residues: S-adenosyl-L-methionine-dependent tRNA 4-demethylwyosine synthase TYW1B (668 aa).

The Flavodoxin-like domain occupies 37-191 (CVQIVIEMQG…NFRAWKTKFI (155 aa)). FMN-binding positions include 43–47 (EMQGF) and 130–162 (VFGL…HRVM). The interval 202-269 (RKKSCGGHCK…QSLNSIVDVE (68 aa)) is disordered. 2 stretches are compositionally biased toward basic and acidic residues: residues 213 to 223 (GKCESHQHGSE) and 233 to 243 (DELHHRDTKEE). The segment covering 244–255 (EPFESSSEEEFG) has biased composition (acidic residues). The Radical SAM core domain maps to 336 to 580 (LWNESHRCME…VDLIPEYEIA (245 aa)). [4Fe-4S] cluster-binding residues include Cys352, Cys356, and Cys359.

It belongs to the TYW1 family. [4Fe-4S] cluster serves as cofactor.

The enzyme catalyses N(1)-methylguanosine(37) in tRNA(Phe) + pyruvate + S-adenosyl-L-methionine = 4-demethylwyosine(37) in tRNA(Phe) + 5'-deoxyadenosine + L-methionine + CO2 + H2O. The protein operates within tRNA modification; wybutosine-tRNA(Phe) biosynthesis. Its function is as follows. Probable component of the wybutosine biosynthesis pathway. Wybutosine is a hyper modified guanosine with a tricyclic base found at the 3'-position adjacent to the anticodon of eukaryotic phenylalanine tRNA. Catalyzes the condensation of N-methylguanine with 2 carbon atoms from pyruvate to form the tricyclic 4-demethylwyosine, an intermediate in wybutosine biosynthesis. The sequence is that of S-adenosyl-L-methionine-dependent tRNA 4-demethylwyosine synthase TYW1B (TYW1B) from Homo sapiens (Human).